Reading from the N-terminus, the 224-residue chain is Urease accessory protein UreF (224 aa).

The protein belongs to the UreF family. UreD, UreF and UreG form a complex that acts as a GTP-hydrolysis-dependent molecular chaperone, activating the urease apoprotein by helping to assemble the nickel containing metallocenter of UreC. The UreE protein probably delivers the nickel.

It localises to the cytoplasm. Required for maturation of urease via the functional incorporation of the urease nickel metallocenter. The protein is Urease accessory protein UreF of Enterobacter sp. (strain 638).